Consider the following 400-residue polypeptide: Phosphoglycerate kinase (400 aa).

Substrate contacts are provided by residues 23–25 (DLN), R38, 61–64 (HFGR), R120, and R153. Residues K203, E325, and 355–358 (GGDT) contribute to the ATP site.

This sequence belongs to the phosphoglycerate kinase family. In terms of assembly, monomer.

It localises to the cytoplasm. The enzyme catalyses (2R)-3-phosphoglycerate + ATP = (2R)-3-phospho-glyceroyl phosphate + ADP. It functions in the pathway carbohydrate degradation; glycolysis; pyruvate from D-glyceraldehyde 3-phosphate: step 2/5. The protein is Phosphoglycerate kinase of Allorhizobium ampelinum (strain ATCC BAA-846 / DSM 112012 / S4) (Agrobacterium vitis (strain S4)).